A 278-amino-acid chain; its full sequence is F-box only protein 17 (278 aa).

The F-box domain occupies 15 to 62; the sequence is SLALDALPPELLVQVLSHVPPRSLVTRCRPVCRAWRDIVDGPTVWLLQ. The FBA domain maps to 99–275; the sequence is YCLRAPFGRN…VTHSSVRVRI (177 aa).

In terms of assembly, part of a SCF (SKP1-cullin-F-box) protein ligase complex. Interacts with SKP1 and CUL1. As to expression, expressed in heart, skeletal muscle, liver and kidney. Expressed at lower levels in spleen and brain.

Functionally, substrate-recognition component of the SCF (SKP1-CUL1-F-box protein)-type E3 ubiquitin ligase complex. Able to recognize and bind denatured glycoproteins, which are modified with complex-type oligosaccharides. Also recognizes sulfated glycans. Does not bind high-mannose glycoproteins. This is F-box only protein 17 (FBXO17) from Homo sapiens (Human).